Consider the following 469-residue polypeptide: 6-phospho-beta-galactosidase (469 aa).

Residues Gln19, His116, Asn159, Glu160, and Asn297 each contribute to the D-galactose 6-phosphate site. Glu160 serves as the catalytic Proton donor. Glu375 (nucleophile) is an active-site residue. D-galactose 6-phosphate contacts are provided by Ser428, Trp429, Lys435, and Tyr437.

It belongs to the glycosyl hydrolase 1 family.

It catalyses the reaction a 6-phospho-beta-D-galactoside + H2O = D-galactose 6-phosphate + an alcohol. It participates in carbohydrate metabolism; lactose degradation; D-galactose 6-phosphate and beta-D-glucose from lactose 6-phosphate: step 1/1. This chain is 6-phospho-beta-galactosidase, found in Streptococcus equi subsp. zooepidemicus (strain H70).